Reading from the N-terminus, the 773-residue chain is Cytochrome c oxidase subunit 1+2 (773 aa).

Residues 1-491 form a COX1 region; sequence MKLLEIYDKQ…LIASYGSLIT (491 aa). The helical transmembrane segment at 41 to 61 threads the bilayer; that stretch reads TMYITFSIFAGIIGTLLSLVI. Residue Glu-64 coordinates Ca(2+). A Fe(II)-heme a-binding site is contributed by His-85. The next 6 helical transmembrane spans lie at 87-111, 130-150, 173-193, 211-231, 262-278, and 290-310; these read LIMI…NWFL, LWLI…GIGA, VGIL…INFL, LFVW…PVLA, LFHP…FGII, and IFGV…GFLV. Residue His-264 coordinates Cu cation. Residues 264 to 268 constitute a cross-link (1'-histidyl-3'-tyrosine (His-Tyr)); it reads HPEVY. Residue Tyr-268 participates in O2 binding. His-314 and His-315 together coordinate Cu cation. Helical transmembrane passes span 335-355 and 362-382; these read IIAI…WGGV and MLFV…GVVL. The Mg(2+) site is built by His-392 and Asp-393. The next 5 helical transmembrane spans lie at 396–416, 444–464, 483–503, 555–575, and 604–624; these read YVVA…IFAG, FWTM…LGLA, IASY…VNIF, IFFY…RILW, and GTVI…LIAI. Position 400 (His-400) interacts with heme a3. His-402 lines the Fe(II)-heme a pocket. Positions 492 to 773 are COX2; the sequence is AFGLLFFFVN…VQEYLGRLYK (282 aa). 4 residues coordinate Cu cation: His-709, Cys-744, Cys-748, and His-752.

This sequence in the N-terminal section; belongs to the heme-copper respiratory oxidase family. In the C-terminal section; belongs to the cytochrome c oxidase subunit 2 family. As to quaternary structure, component of the cytochrome c oxidase (complex IV, CIV), a multisubunit enzyme composed of a catalytic core of 3 subunits and several supernumerary subunits. The complex exists as a monomer or a dimer and forms supercomplexes (SCs) in the inner mitochondrial membrane with ubiquinol-cytochrome c oxidoreductase (cytochrome b-c1 complex, complex III, CIII). It depends on heme as a cofactor. Cu cation serves as cofactor.

Its subcellular location is the mitochondrion inner membrane. It catalyses the reaction 4 Fe(II)-[cytochrome c] + O2 + 8 H(+)(in) = 4 Fe(III)-[cytochrome c] + 2 H2O + 4 H(+)(out). It participates in energy metabolism; oxidative phosphorylation. Functionally, component of the cytochrome c oxidase, the last enzyme in the mitochondrial electron transport chain which drives oxidative phosphorylation. The respiratory chain contains 3 multisubunit complexes succinate dehydrogenase (complex II, CII), ubiquinol-cytochrome c oxidoreductase (cytochrome b-c1 complex, complex III, CIII) and cytochrome c oxidase (complex IV, CIV), that cooperate to transfer electrons derived from NADH and succinate to molecular oxygen, creating an electrochemical gradient over the inner membrane that drives transmembrane transport and the ATP synthase. Cytochrome c oxidase is the component of the respiratory chain that catalyzes the reduction of oxygen to water. Electrons originating from reduced cytochrome c in the intermembrane space (IMS) are transferred via the dinuclear copper A center (CU(A)) of subunit 2 and heme A of subunit 1 to the active site in subunit 1, a binuclear center (BNC) formed by heme A3 and copper B (CU(B)). The BNC reduces molecular oxygen to 2 water molecules using 4 electrons from cytochrome c in the IMS and 4 protons from the mitochondrial matrix. The sequence is that of Cytochrome c oxidase subunit 1+2 (cox1/2) from Dictyostelium citrinum (Slime mold).